The sequence spans 240 residues: 2,3,4,5-tetrahydropyridine-2,6-dicarboxylate N-acetyltransferase (240 aa).

This sequence belongs to the transferase hexapeptide repeat family. DapH subfamily.

It catalyses the reaction (S)-2,3,4,5-tetrahydrodipicolinate + acetyl-CoA + H2O = L-2-acetamido-6-oxoheptanedioate + CoA. The protein operates within amino-acid biosynthesis; L-lysine biosynthesis via DAP pathway; LL-2,6-diaminopimelate from (S)-tetrahydrodipicolinate (acetylase route): step 1/3. In terms of biological role, catalyzes the transfer of an acetyl group from acetyl-CoA to tetrahydrodipicolinate. In Bacillus cytotoxicus (strain DSM 22905 / CIP 110041 / 391-98 / NVH 391-98), this protein is 2,3,4,5-tetrahydropyridine-2,6-dicarboxylate N-acetyltransferase.